The primary structure comprises 509 residues: tRNA-2-methylthio-N(6)-dimethylallyladenosine synthase (509 aa).

Residues 1-21 are disordered; the sequence is MNEKQKLESGQVHPSDKKSEK. An MTTase N-terminal domain is found at 66 to 184; the sequence is RKFYIRTYGC…LPELLSEAYL (119 aa). [4Fe-4S] cluster-binding residues include cysteine 75, cysteine 111, cysteine 145, cysteine 221, cysteine 225, and cysteine 228. A Radical SAM core domain is found at 207–437; that stretch reads RNGKIKGWVN…NALVNEISAK (231 aa). In terms of domain architecture, TRAM spans 440–503; the sequence is KEYEGKVVEV…TWSLDGEMVG (64 aa).

Belongs to the methylthiotransferase family. MiaB subfamily. In terms of assembly, monomer. The cofactor is [4Fe-4S] cluster.

It localises to the cytoplasm. It carries out the reaction N(6)-dimethylallyladenosine(37) in tRNA + (sulfur carrier)-SH + AH2 + 2 S-adenosyl-L-methionine = 2-methylsulfanyl-N(6)-dimethylallyladenosine(37) in tRNA + (sulfur carrier)-H + 5'-deoxyadenosine + L-methionine + A + S-adenosyl-L-homocysteine + 2 H(+). The enzyme catalyses N(6)-dimethylallyladenosine(37) in tRNA + (sulfur carrier)-SH + AH2 + S-adenosyl-L-methionine = 2-thio-N(6)-dimethylallyladenosine(37) in tRNA + (sulfur carrier)-H + 5'-deoxyadenosine + L-methionine + A + H(+). The catalysed reaction is 2-thio-N(6)-dimethylallyladenosine(37) in tRNA + S-adenosyl-L-methionine = 2-methylsulfanyl-N(6)-dimethylallyladenosine(37) in tRNA + S-adenosyl-L-homocysteine + H(+). Catalyzes the methylthiolation of N6-(dimethylallyl)adenosine (i(6)A), leading to the formation of 2-methylthio-N6-(dimethylallyl)adenosine (ms(2)i(6)A) at position 37 in tRNAs that read codons beginning with uridine. This chain is tRNA-2-methylthio-N(6)-dimethylallyladenosine synthase, found in Bacillus subtilis (strain 168).